The primary structure comprises 292 residues: UPF0696 protein C11orf68 homolog (292 aa).

A compositionally biased stretch (low complexity) spans 1–10 (MAAAAAAVAG). Residues 1-60 (MAAAAAAVAGAGRGGGGGADPGQERSRARSWVGAERSEGRRMEPNEELEEEDSPGGREDG) form a disordered region. A compositionally biased stretch (gly residues) spans 11-20 (AGRGGGGGAD). The segment covering 35-44 (ERSEGRRMEP) has biased composition (basic and acidic residues).

The protein belongs to the UPF0696 family.

The sequence is that of UPF0696 protein C11orf68 homolog (Bles03) from Rattus norvegicus (Rat).